Here is a 617-residue protein sequence, read N- to C-terminus: Probable Xaa-Pro aminopeptidase P (617 aa).

Positions 414, 425, 523, and 537 each coordinate Mn(2+).

The protein belongs to the peptidase M24B family. Mn(2+) is required as a cofactor.

The enzyme catalyses Release of any N-terminal amino acid, including proline, that is linked to proline, even from a dipeptide or tripeptide.. Its function is as follows. Catalyzes the removal of a penultimate prolyl residue from the N-termini of peptides. This is Probable Xaa-Pro aminopeptidase P (AMPP) from Ajellomyces dermatitidis (strain ER-3 / ATCC MYA-2586) (Blastomyces dermatitidis).